A 47-amino-acid polypeptide reads, in one-letter code: Large ribosomal subunit protein bL33 (47 aa).

This sequence belongs to the bacterial ribosomal protein bL33 family.

The chain is Large ribosomal subunit protein bL33 from Staphylococcus xylosus.